The following is a 719-amino-acid chain: Polyribonucleotide nucleotidyltransferase (719 aa).

The Mg(2+) site is built by Asp-491 and Asp-497. The region spanning 558 to 617 (PRMLTIKINPEKIRDVIGKGGATIRALTEETGTQIDISDDGTIVIASVDEAQAKEAQRRI) is the KH domain. In terms of domain architecture, S1 motif spans 627-695 (GQVYDGSVLR…DKGRLRLSVK (69 aa)).

Belongs to the polyribonucleotide nucleotidyltransferase family. Mg(2+) is required as a cofactor.

It localises to the cytoplasm. It catalyses the reaction RNA(n+1) + phosphate = RNA(n) + a ribonucleoside 5'-diphosphate. In terms of biological role, involved in mRNA degradation. Catalyzes the phosphorolysis of single-stranded polyribonucleotides processively in the 3'- to 5'-direction. This chain is Polyribonucleotide nucleotidyltransferase, found in Bordetella petrii (strain ATCC BAA-461 / DSM 12804 / CCUG 43448).